We begin with the raw amino-acid sequence, 314 residues long: METPFAGPWHQFVEDLGQTPCLPGKDLDSILAGWGQLAGTLATRYGFPPPDESVATEDVQLDGLWLRCYTPANATGQEPVGLYFHGGGWVMGGVKEEDGFCRVISRQCQMRLVSVEYRKAPETRYPGALNDGVSAALWAQSRYENQPLVLMGTSAGGNLAFGTALRLIDQDMADKVSGVVALAPITVHPDAVPEHLKEQYTAYEENAELTVNSRAAMQVFFDCYKAPVDDVYTSCLLHPRLLALPKVYIAELGLDTLRDDARLMKGALDTAKVPVMYDAYPGYPHCSFMFPFKSLGEHQRTFLGGVAKAVRWMS.

The Involved in the stabilization of the negatively charged intermediate by the formation of the oxyanion hole signature appears at 85–87 (HGG). Active-site residues include serine 154, aspartate 255, and histidine 285.

The protein belongs to the 'GDXG' lipolytic enzyme family.

It carries out the reaction (2S,3S)-versiconal hemiacetal acetate + H2O = (2S-3S)-versiconal hemiacetal + acetate + H(+). It catalyses the reaction (3S)-versiconol acetate + H2O = (S)-versiconol + acetate + H(+). Its pathway is mycotoxin biosynthesis; aflatoxin biosynthesis. Versiconal hemiacetal acetate esterase; part of the gene cluster that mediates the biosynthesis of aflatoxins, a group of polyketide-derived furanocoumarins, and part of the most toxic and carcinogenic compounds among the known mycotoxins. The four major aflatoxins produced by A.parasiticus are aflatoxin B1 (AFB1), aflatoxin B2 (AFB2), aflatoxin G1 (AFG1) and aflatoxin G2 (AFG2). Within the aflatoxin pathway, the versiconal hemiacetal acetate esterase aflJ converts versiconal hemiacetal acetate (VHA) into versiconal (VAL). The biosynthesis of aflatoxins begins with the norsolorinic acid synthase aflC that combines a hexanoyl starter unit produced by the fatty acid synthase aflA/aflB and 7 malonyl-CoA extender units to synthesize the precursor NOR. The second step is the conversion of NOR to averantin and requires the norsolorinic acid ketoreductase aflD, which catalyzes the dehydration of norsolorinic acid to form (1'S)-averantin. The norsolorinic acid reductases aflE and aflF may also play a role in the conversion of NOR to AVN. The cytochrome P450 monooxygenase aflG then catalyzes the hydroxylation of AVN to 5'hydroxyaverantin (HAVN). The next step is performed by the 5'-hydroxyaverantin dehydrogenase aflH that transforms HAVN to 5'-oxoaverantin (OAVN) which is further converted to averufin (AVF) by aflK that plays a dual role in the pathway, as a 5'-oxoaverantin cyclase that mediates conversion of 5'-oxoaverantin, as well as a versicolorin B synthase in a later step in the pathway. The averufin oxidase aflI catalyzes the conversion of AVF to versiconal hemiacetal acetate (VHA). VHA is then the substrate for the versiconal hemiacetal acetate esterase aflJ to yield versiconal (VAL). Versicolorin B synthase aflK then converts VAL to versicolorin B (VERB) by closing the bisfuran ring of aflatoxin which is required for DNA-binding, thus giving to aflatoxin its activity as a mutagen. Then, the activity of the versicolorin B desaturase aflL leads to versicolorin A (VERA). A branch point starts from VERB since it can also be converted to dihydrodemethylsterigmatocystin (DMDHST), probably also by aflL, VERA being a precursor for aflatoxins B1 and G1, and DMDHST for aflatoxins B2 and G2. Next, the versicolorin reductase aflM and the cytochrome P450 monooxygenase aflN are involved in conversion of VERA to demethylsterigmatocystin (DMST). AflX and aflY seem also involved in this step, through probable aflX-mediated epoxide ring-opening step following versicolorin A oxidation and aflY-mediated Baeyer-Villiger oxidation required for the formation of the xanthone ring. The methyltransferase aflO then leads to the modification of DMST to sterigmatocystin (ST), and of DMDHST to dihydrosterigmatocystin (DHST). Both ST and DHST are then substrates of the O-methyltransferase aflP to yield O-methylsterigmatocystin (OMST) and dihydro-O-methylsterigmatocystin (DHOMST), respectively. Finally OMST is converted to aflatoxins B1 and G1, and DHOMST to aflatoxins B2 and G2, via the action of several enzymes including O-methylsterigmatocystin oxidoreductase aflQ, the cytochrome P450 monooxygenase aflU, but also the NADH-dependent flavin oxidoreductase nadA which is specifically required for the synthesis of AFG1. This Aspergillus parasiticus (strain ATCC 56775 / NRRL 5862 / SRRC 143 / SU-1) protein is Versiconal hemiacetal acetate esterase.